A 1044-amino-acid polypeptide reads, in one-letter code: Elongation factor 3 (1044 aa).

The HEAT 1 repeat unit spans residues 5-42 (AQSIKVLGELFEKLSVATAENREATATEIASFLNGNII). 2 residues coordinate ADP: isoleucine 42 and histidine 44. The HEAT 2 repeat unit spans residues 45 to 80 (DVPEEFFKNLTKAVKDKKTAAAALETIAHIANENNL). Position 83 (serine 83) interacts with ADP. HEAT repeat units follow at residues 86–123 (PYIV…AIDP), 124–162 (VAIK…AAKT), 166–203 (LRMP…TVDN), 205–241 (DIER…EVTP), 242–279 (ATLS…LVED), and 285–323 (PFLE…VGNV). ADP contacts are provided by threonine 392, histidine 396, and glutamate 397. 2 ABC transporter domains span residues 426–641 (DEGE…YYEL) and 667–993 (VKVS…KKED). Residues asparagine 703, glutamate 922, asparagine 925, and histidine 951 each contribute to the ADP site. Residues 975–1044 (GHNWVSGQGS…DAYVSSDDEF (70 aa)) form a disordered region. The span at 987-999 (RLEKKEDEGDKFD) shows a compositional bias: basic and acidic residues. Residues 1009–1031 (NKKKKLSSAELRKKKKERMKKKK) are compositionally biased toward basic residues.

This sequence belongs to the ABC transporter superfamily. ABCF family. EF3 subfamily. Monomer.

The protein resides in the cytoplasm. It catalyses the reaction ATP + H2O = ADP + phosphate + H(+). Its pathway is protein biosynthesis; polypeptide chain elongation. Functionally, ribosome-dependent ATPase that functions in cytoplasmic translation elongation. Required for the ATP-dependent release of deacylated tRNA from the ribosomal E-site during protein biosynthesis. Stimulates the eEF1A-dependent binding of aminoacyl-tRNA to the ribosomal A-site, which has reduced affinity for tRNA as long as the E-site is occupied. Assists translation termination by stimulating the release of nascent protein from the ribosome by release factors. In Eremothecium gossypii (strain ATCC 10895 / CBS 109.51 / FGSC 9923 / NRRL Y-1056) (Yeast), this protein is Elongation factor 3 (TEF3).